Here is a 339-residue protein sequence, read N- to C-terminus: Phenylalanine--tRNA ligase alpha subunit (339 aa).

Residue Glu-254 coordinates Mg(2+).

Belongs to the class-II aminoacyl-tRNA synthetase family. Phe-tRNA synthetase alpha subunit type 1 subfamily. As to quaternary structure, tetramer of two alpha and two beta subunits. Requires Mg(2+) as cofactor.

It localises to the cytoplasm. The catalysed reaction is tRNA(Phe) + L-phenylalanine + ATP = L-phenylalanyl-tRNA(Phe) + AMP + diphosphate + H(+). The polypeptide is Phenylalanine--tRNA ligase alpha subunit (Clostridium beijerinckii (strain ATCC 51743 / NCIMB 8052) (Clostridium acetobutylicum)).